We begin with the raw amino-acid sequence, 894 residues long: Translation initiation factor IF-2 (894 aa).

Residues 52 to 301 (DRGAAPNKLT…RRPSTLTQGF (250 aa)) are disordered. The segment covering 68–82 (STLNIPSTGGKSKSV) has biased composition (polar residues). The span at 107–154 (EQARREAEELAQHQVQRDAEEKAKRAAEDKAKREAAEQAKRVAAESDK) shows a compositional bias: basic and acidic residues. Residues 155–168 (LTNQQTNTMTKSPQ) are compositionally biased toward polar residues. Basic and acidic residues-rich tracts occupy residues 171 to 214 (EKAR…ERGG) and 237 to 254 (HARE…GDRR). Residues 255-269 (SRTRGGKATKQKKTS) show a composition bias toward basic residues. Basic and acidic residues predominate over residues 270–283 (RLSESKADREEARA). The tr-type G domain occupies 393–562 (SRAPVVTIMG…LLQAEVLELK (170 aa)). A G1 region spans residues 402-409 (GHVDHGKT). A GTP-binding site is contributed by 402–409 (GHVDHGKT). The tract at residues 427–431 (GITQH) is G2. A G3 region spans residues 448–451 (DTPG). Residues 448–452 (DTPGH) and 502–505 (NKID) each bind GTP. A G4 region spans residues 502-505 (NKID). The interval 538–540 (SAK) is G5.

The protein belongs to the TRAFAC class translation factor GTPase superfamily. Classic translation factor GTPase family. IF-2 subfamily.

It is found in the cytoplasm. Its function is as follows. One of the essential components for the initiation of protein synthesis. Protects formylmethionyl-tRNA from spontaneous hydrolysis and promotes its binding to the 30S ribosomal subunits. Also involved in the hydrolysis of GTP during the formation of the 70S ribosomal complex. The chain is Translation initiation factor IF-2 from Sodalis glossinidius (strain morsitans).